The chain runs to 255 residues: ATP synthase subunit a (255 aa).

Transmembrane regions (helical) follow at residues Val-28–Gly-48, Ile-86–Val-106, Ile-125–Ile-145, Phe-164–Ile-184, Leu-203–Trp-223, and Ala-224–Val-244.

Belongs to the ATPase A chain family. As to quaternary structure, F-type ATPases have 2 components, CF(1) - the catalytic core - and CF(0) - the membrane proton channel. CF(1) has five subunits: alpha(3), beta(3), gamma(1), delta(1), epsilon(1). CF(0) has three main subunits: a(1), b(2) and c(9-12). The alpha and beta chains form an alternating ring which encloses part of the gamma chain. CF(1) is attached to CF(0) by a central stalk formed by the gamma and epsilon chains, while a peripheral stalk is formed by the delta and b chains.

The protein resides in the cell inner membrane. In terms of biological role, key component of the proton channel; it plays a direct role in the translocation of protons across the membrane. The polypeptide is ATP synthase subunit a (Alkalilimnicola ehrlichii (strain ATCC BAA-1101 / DSM 17681 / MLHE-1)).